The primary structure comprises 183 residues: Ribulose bisphosphate carboxylase small subunit, chloroplastic (183 aa).

Residues 1 to 58 (MASSMLSTAAVACINRASPAQASMVAPFTGLKSTSAFPTTRKTTTDITSIASNGGRVQ) constitute a chloroplast transit peptide.

This sequence belongs to the RuBisCO small chain family. As to quaternary structure, heterohexadecamer of 8 large and 8 small subunits.

The protein localises to the plastid. It is found in the chloroplast. In terms of biological role, ruBisCO catalyzes two reactions: the carboxylation of D-ribulose 1,5-bisphosphate, the primary event in carbon dioxide fixation, as well as the oxidative fragmentation of the pentose substrate. Both reactions occur simultaneously and in competition at the same active site. Although the small subunit is not catalytic it is essential for maximal activity. The sequence is that of Ribulose bisphosphate carboxylase small subunit, chloroplastic from Hevea brasiliensis (Para rubber tree).